The primary structure comprises 224 residues: 2-C-methyl-D-erythritol 4-phosphate cytidylyltransferase (224 aa).

The protein belongs to the IspD/TarI cytidylyltransferase family. IspD subfamily.

The catalysed reaction is 2-C-methyl-D-erythritol 4-phosphate + CTP + H(+) = 4-CDP-2-C-methyl-D-erythritol + diphosphate. It functions in the pathway isoprenoid biosynthesis; isopentenyl diphosphate biosynthesis via DXP pathway; isopentenyl diphosphate from 1-deoxy-D-xylulose 5-phosphate: step 2/6. Its function is as follows. Catalyzes the formation of 4-diphosphocytidyl-2-C-methyl-D-erythritol from CTP and 2-C-methyl-D-erythritol 4-phosphate (MEP). The chain is 2-C-methyl-D-erythritol 4-phosphate cytidylyltransferase from Caldicellulosiruptor bescii (strain ATCC BAA-1888 / DSM 6725 / KCTC 15123 / Z-1320) (Anaerocellum thermophilum).